The following is a 557-amino-acid chain: Membrane protein insertase YidC (557 aa).

Residues 7 to 27 form a helical membrane-spanning segment; it reads ILLVALAVVSYLLVLQWNQDY. The segment at 42–77 is disordered; that stretch reads ASPALPETVPGDSSTSADVPTAGSGNQVPDSAASTA. Over residues 52–77 the composition is skewed to polar residues; the sequence is GDSSTSADVPTAGSGNQVPDSAASTA. Transmembrane regions (helical) follow at residues 370-390, 436-456, and 514-534; these read WGWS…PLSA, LGGC…YWVL, and PIIF…YWVV.

It belongs to the OXA1/ALB3/YidC family. Type 1 subfamily. As to quaternary structure, interacts with the Sec translocase complex via SecD. Specifically interacts with transmembrane segments of nascent integral membrane proteins during membrane integration.

It localises to the cell inner membrane. In terms of biological role, required for the insertion and/or proper folding and/or complex formation of integral membrane proteins into the membrane. Involved in integration of membrane proteins that insert both dependently and independently of the Sec translocase complex, as well as at least some lipoproteins. Aids folding of multispanning membrane proteins. The chain is Membrane protein insertase YidC from Azotobacter vinelandii (strain DJ / ATCC BAA-1303).